The sequence spans 502 residues: Intracellular exo-alpha-(1-&gt;5)-L-arabinofuranosidase (502 aa).

Alpha-L-arabinofuranose-binding residues include glutamate 29, asparagine 74, and asparagine 174. Glutamate 175 functions as the Proton donor/acceptor in the catalytic mechanism. The alpha-L-arabinofuranose site is built by tyrosine 246, glutamate 294, and glutamine 351. Catalysis depends on glutamate 294, which acts as the Nucleophile.

It belongs to the glycosyl hydrolase 51 family. Homohexamer; trimer of dimers.

Its subcellular location is the cytoplasm. It carries out the reaction Hydrolysis of terminal non-reducing alpha-L-arabinofuranoside residues in alpha-L-arabinosides.. Its pathway is glycan metabolism; L-arabinan degradation. With respect to regulation, strongly inhibited by Hg(2+). Its function is as follows. Involved in the degradation of arabinan and is a key enzyme in the complete degradation of the plant cell wall. Catalyzes the cleavage of terminal alpha-(1-&gt;5)-arabinofuranosyl bonds in different hemicellulosic homopolysaccharides (branched and debranched arabinans). It acts preferentially on aryl-alpha-L-arabinofuranosides, and is much less effective on aryl-beta-D-xylopyranosides. The sequence is that of Intracellular exo-alpha-(1-&gt;5)-L-arabinofuranosidase (abfA) from Geobacillus stearothermophilus (Bacillus stearothermophilus).